The chain runs to 1080 residues: Carbamoyl phosphate synthase large chain (1080 aa).

A carboxyphosphate synthetic domain region spans residues 1–403 (MPKRTDLKTI…SLQKALRGLE (403 aa)). Arg-129, Arg-169, Gly-175, Gly-176, Glu-208, Val-210, Glu-215, Gly-241, Val-242, His-243, Gln-285, and Glu-299 together coordinate ATP. Residues 133–328 (RVAMGEIGLD…IAKVAAKLAV (196 aa)) form the ATP-grasp 1 domain. Residues Gln-285, Glu-299, and Asn-301 each coordinate Mg(2+). Gln-285, Glu-299, and Asn-301 together coordinate Mn(2+). An oligomerization domain region spans residues 404–554 (TGKIGLDPTG…YSTYEDECEA (151 aa)). The tract at residues 555–942 (LPSNRDKIMI…AFARAQEAGG (388 aa)) is carbamoyl phosphate synthetic domain. The ATP-grasp 2 domain occupies 679 to 876 (QQLVDKLGLK…LAKIAARCMA (198 aa)). ATP-binding residues include Arg-715, Arg-754, Leu-756, Glu-761, Gly-787, Val-788, His-789, Ser-790, Gln-830, and Glu-847. 3 residues coordinate Mg(2+): Gln-830, Glu-847, and Asn-849. Residues Gln-830, Glu-847, and Asn-849 each coordinate Mn(2+). Residues 943–1080 (IKAPPLGKAF…LQELHKELEA (138 aa)) enclose the MGS-like domain. An allosteric domain region spans residues 943–1080 (IKAPPLGKAF…LQELHKELEA (138 aa)).

The protein belongs to the CarB family. In terms of assembly, composed of two chains; the small (or glutamine) chain promotes the hydrolysis of glutamine to ammonia, which is used by the large (or ammonia) chain to synthesize carbamoyl phosphate. Tetramer of heterodimers (alpha,beta)4. The cofactor is Mg(2+). Mn(2+) serves as cofactor.

The enzyme catalyses hydrogencarbonate + L-glutamine + 2 ATP + H2O = carbamoyl phosphate + L-glutamate + 2 ADP + phosphate + 2 H(+). The catalysed reaction is hydrogencarbonate + NH4(+) + 2 ATP = carbamoyl phosphate + 2 ADP + phosphate + 2 H(+). It participates in amino-acid biosynthesis; L-arginine biosynthesis; carbamoyl phosphate from bicarbonate: step 1/1. Its pathway is pyrimidine metabolism; UMP biosynthesis via de novo pathway; (S)-dihydroorotate from bicarbonate: step 1/3. Its function is as follows. Large subunit of the glutamine-dependent carbamoyl phosphate synthetase (CPSase). CPSase catalyzes the formation of carbamoyl phosphate from the ammonia moiety of glutamine, carbonate, and phosphate donated by ATP, constituting the first step of 2 biosynthetic pathways, one leading to arginine and/or urea and the other to pyrimidine nucleotides. The large subunit (synthetase) binds the substrates ammonia (free or transferred from glutamine from the small subunit), hydrogencarbonate and ATP and carries out an ATP-coupled ligase reaction, activating hydrogencarbonate by forming carboxy phosphate which reacts with ammonia to form carbamoyl phosphate. This chain is Carbamoyl phosphate synthase large chain, found in Xanthomonas campestris pv. campestris (strain ATCC 33913 / DSM 3586 / NCPPB 528 / LMG 568 / P 25).